Consider the following 99-residue polypeptide: Integration host factor subunit beta (99 aa).

This sequence belongs to the bacterial histone-like protein family. Heterodimer of an alpha and a beta chain.

Its function is as follows. This protein is one of the two subunits of integration host factor, a specific DNA-binding protein that functions in genetic recombination as well as in transcriptional and translational control. The polypeptide is Integration host factor subunit beta (Laribacter hongkongensis (strain HLHK9)).